Here is a 113-residue protein sequence, read N- to C-terminus: U11-theraphotoxin-Hhn1j (113 aa).

The first 21 residues, 1–21 (MNTVRVTFLLVFVLAVSLGQA), serve as a signal peptide directing secretion. Residues 22–74 (DKDENRMEMQEKTEQGKSYLDFAENLLLQKLEELEAKLLEEDSEESRNSRQKR) constitute a propeptide that is removed on maturation. Basic and acidic residues predominate over residues 60–69 (LEEDSEESRN). The interval 60–83 (LEEDSEESRNSRQKRCIGEGVPCD) is disordered. Cystine bridges form between Cys75/Cys90, Cys82/Cys95, and Cys89/Cys110.

The protein belongs to the neurotoxin 14 (magi-1) family. 01 (HNTX-16) subfamily. As to expression, expressed by the venom gland.

It is found in the secreted. Probable ion channel inhibitor. The protein is U11-theraphotoxin-Hhn1j of Cyriopagopus hainanus (Chinese bird spider).